Reading from the N-terminus, the 272-residue chain is 3-methyl-2-oxobutanoate hydroxymethyltransferase (272 aa).

Positions 43 and 82 each coordinate Mg(2+). 3-methyl-2-oxobutanoate-binding positions include 43 to 44 (DS), Asp-82, and Lys-112. Residue Glu-114 coordinates Mg(2+). Catalysis depends on Glu-179, which acts as the Proton acceptor.

The protein belongs to the PanB family. In terms of assembly, homodecamer; pentamer of dimers. Mg(2+) serves as cofactor.

It is found in the cytoplasm. It catalyses the reaction 3-methyl-2-oxobutanoate + (6R)-5,10-methylene-5,6,7,8-tetrahydrofolate + H2O = 2-dehydropantoate + (6S)-5,6,7,8-tetrahydrofolate. It participates in cofactor biosynthesis; (R)-pantothenate biosynthesis; (R)-pantoate from 3-methyl-2-oxobutanoate: step 1/2. Catalyzes the reversible reaction in which hydroxymethyl group from 5,10-methylenetetrahydrofolate is transferred onto alpha-ketoisovalerate to form ketopantoate. The protein is 3-methyl-2-oxobutanoate hydroxymethyltransferase of Staphylococcus aureus (strain COL).